A 65-amino-acid chain; its full sequence is Disintegrin CC8B (65 aa).

In terms of domain architecture, Disintegrin spans 1–65 (NSAHPCCDPV…DCPRNPWHKS (65 aa)). Disulfide bonds link Cys6–Cys29, Cys20–Cys26, Cys25–Cys50, and Cys38–Cys57. A Cell attachment site; atypical (WGD) motif is present at residues 42 to 44 (WGD).

It belongs to the disintegrin family. Dimeric disintegrin subfamily. Heterodimer with CC8A; disulfide-linked. As to expression, expressed by the venom gland.

The protein localises to the secreted. Its function is as follows. Inhibits integrins alpha-IIb/beta-3 (ITGA2B/ITGB3), alpha-V/beta-3 (ITGAV/ITGB3), and alpha-5/beta-1 (ITGA5/ITGB1). The polypeptide is Disintegrin CC8B (Cerastes cerastes (Horned desert viper)).